A 424-amino-acid chain; its full sequence is MAKNIQAIRGMNDYLPADTAIWQRIESILKQVLSGYGYSEIRMPIVEQTPLFKRAIGEVTDVVEKEMYTFDDRNGESLTLRPEGTAGCVRAGIEHGLLYNQEQRLWYIGPMFRYERPQKGRYRQFHQLGAEVFGLPGPDIDAELILLTARWWRALGIFEHVKLELNSIGSLAARADYREALVAFLEQHVEVLDEDCKRRMYSNPLRVLDSKNPDVQQLLDDAPKLSDYLDEESKQHFAGLCELLDKASIPYTVNERLVRGLDYYNRTVFEWVTHSLGAQGTVCAGGRYDGLVEQLGGRATPAVGFAMGLERLVLLVQAVNADFQVPATVDAYVISSGEGAQSAAMLLAESLRDALPTLKIMTNYGGGNVKKQFTRADKWGARVALMLGESEVAAQQVVVKDLRNGEQETLAQADVAARLALMLG.

The protein belongs to the class-II aminoacyl-tRNA synthetase family. In terms of assembly, homodimer.

Its subcellular location is the cytoplasm. It catalyses the reaction tRNA(His) + L-histidine + ATP = L-histidyl-tRNA(His) + AMP + diphosphate + H(+). The sequence is that of Histidine--tRNA ligase from Yersinia pestis bv. Antiqua (strain Antiqua).